Consider the following 301-residue polypeptide: Sulfate adenylyltransferase subunit 2 (301 aa).

Belongs to the PAPS reductase family. CysD subfamily. As to quaternary structure, heterodimer composed of CysD, the smaller subunit, and CysN.

The enzyme catalyses sulfate + ATP + H(+) = adenosine 5'-phosphosulfate + diphosphate. Its pathway is sulfur metabolism; hydrogen sulfide biosynthesis; sulfite from sulfate: step 1/3. In terms of biological role, with CysN forms the ATP sulfurylase (ATPS) that catalyzes the adenylation of sulfate producing adenosine 5'-phosphosulfate (APS) and diphosphate, the first enzymatic step in sulfur assimilation pathway. APS synthesis involves the formation of a high-energy phosphoric-sulfuric acid anhydride bond driven by GTP hydrolysis by CysN coupled to ATP hydrolysis by CysD. This is Sulfate adenylyltransferase subunit 2 from Citrifermentans bemidjiense (strain ATCC BAA-1014 / DSM 16622 / JCM 12645 / Bem) (Geobacter bemidjiensis).